We begin with the raw amino-acid sequence, 701 residues long: MLRLEEIDLDTIKKELDEERKKVEEIMKGNIPTEIKDLIKMVLFIVESPNKARTIANFFGKPSVRRIGNIKAYETTTGKYILTIVATKGHLFELTLKEEGVYGVLKEKEYVPIFSPIKKCLDCGHQFVDEDKCPRCGSENIDDASDRIKVLRDLAQEADIVLIGTDPDAEGEKIAYDVYSIIRPYNKNIYRAEFHEVTRQAIIKALEEIRDINTNRVKAQLVRRIEDRWIGFALSQRLWSRFKKKTLSAGRVQTPVLGFIIKRYEEYKKNRAHYYAVKTSDFEVTFISDDPLEKYDKTIKIEKIEEKESEKKPLPPYTTDSLLRDAVIELRLSVDKIMALAQNLFEWGLITYHRTDSTHISNLGIQIAQTYIENTFGKEYFYPRHWGEEGTHEAIRPTKPIDTETLIKMLREGDIQIQGITKEHIRLYDLIFRRFIASQMKPFIAIETKFNAVWSNLNTTIEGITDIKENGWNLIKPIKLLAIKEGEYEVIDVKHWIGSKVPLYTQADVIELMKEQNIGRPSTYATIVKKLFERYYVIEKNQRLIPTERGIKVYQYLTERFGHLVDVKLTADLLEKMDRIENGELDYMDVLRSFKKELIEIWKTKETKYIADGIYKWKEYSVPAIVYERYEKILKRKKVYPEYLTPWSRAIYNALPLDNEIEKQTLALAIEKDFEILTKKPILREYKKKYEHLKNLVDQLL.

A Toprim domain is found at 41 to 197 (MVLFIVESPN…NIYRAEFHEV (157 aa)). Position 47 (glutamate 47) interacts with Mg(2+). The RG C-terminal-type zinc finger occupies 117–143 (IKKCLDCGHQFVDEDKCPRCGSENIDD). Cysteine 120, cysteine 123, cysteine 133, and cysteine 136 together coordinate Zn(2+). Mg(2+) is bound at residue aspartate 166. The Topo IA-type catalytic domain maps to 213–602 (NTNRVKAQLV…SFKKELIEIW (390 aa)). Catalysis depends on tyrosine 352, which acts as the O-(5'-phospho-DNA)-tyrosine intermediate.

Belongs to the type IA topoisomerase family. Heterodimer of an RgyA and RgyB subunit. Zn(2+) serves as cofactor. Requires Mg(2+) as cofactor.

The protein localises to the cytoplasm. Its function is as follows. Modifies the topological state of DNA by introducing positive supercoils in an ATP-dependent process. Binds to single-stranded DNA, transiently cleaves and then rejoins the end, introducing a positive supercoil in the process. The scissile phosphodiester is attacked by the catalytic tyrosine of the enzyme, resulting in the formation of a DNA-(5'-phosphotyrosyl)-enzyme intermediate. Probably involved in rewinding DNA strands in regions of the chromosome that have opened up to allow replication, transcription, DNA repair or for DNA protection. Reconstituted holoenzyme binds dsDNA a bit better than ssDNA, this subunit preferentially binds ssDNA. In isolation this subunit relaxes negatively-supercoiled DNA, and stimulates the endogenous ATPase activity of the RgyB subunit. The chain is Reverse gyrase subunit A from Nanoarchaeum equitans (strain Kin4-M).